The chain runs to 143 residues: Large ribosomal subunit protein uL11 (143 aa).

Belongs to the universal ribosomal protein uL11 family. In terms of assembly, part of the ribosomal stalk of the 50S ribosomal subunit. Interacts with L10 and the large rRNA to form the base of the stalk. L10 forms an elongated spine to which L12 dimers bind in a sequential fashion forming a multimeric L10(L12)X complex. One or more lysine residues are methylated.

Functionally, forms part of the ribosomal stalk which helps the ribosome interact with GTP-bound translation factors. The polypeptide is Large ribosomal subunit protein uL11 (Clavibacter michiganensis subsp. michiganensis (strain NCPPB 382)).